The primary structure comprises 283 residues: Pantothenate synthetase (283 aa).

ATP is bound at residue Met30–His37. His37 functions as the Proton donor in the catalytic mechanism. Gln61 serves as a coordination point for (R)-pantoate. Gln61 is a beta-alanine binding site. Gly149 to Asp152 contacts ATP. Residue Gln155 coordinates (R)-pantoate. Leu186 to Arg189 lines the ATP pocket.

Belongs to the pantothenate synthetase family. As to quaternary structure, homodimer.

The protein resides in the cytoplasm. It catalyses the reaction (R)-pantoate + beta-alanine + ATP = (R)-pantothenate + AMP + diphosphate + H(+). The protein operates within cofactor biosynthesis; (R)-pantothenate biosynthesis; (R)-pantothenate from (R)-pantoate and beta-alanine: step 1/1. Catalyzes the condensation of pantoate with beta-alanine in an ATP-dependent reaction via a pantoyl-adenylate intermediate. The sequence is that of Pantothenate synthetase from Escherichia coli (strain ATCC 8739 / DSM 1576 / NBRC 3972 / NCIMB 8545 / WDCM 00012 / Crooks).